The sequence spans 85 residues: Small ribosomal subunit protein bS18c (85 aa).

The protein belongs to the bacterial ribosomal protein bS18 family. Part of the 30S ribosomal subunit.

The protein resides in the plastid. The protein localises to the chloroplast. The sequence is that of Small ribosomal subunit protein bS18c from Tupiella akineta (Green alga).